The sequence spans 248 residues: Type III pantothenate kinase (248 aa).

6-13 lines the ATP pocket; it reads DCGNSFIK. Substrate contacts are provided by residues Tyr-92 and 99–102; that span reads GLDR. Asp-101 serves as the catalytic Proton acceptor. A K(+)-binding site is contributed by Asp-121. Thr-124 provides a ligand contact to ATP. Thr-180 serves as a coordination point for substrate.

The protein belongs to the type III pantothenate kinase family. As to quaternary structure, homodimer. NH4(+) serves as cofactor. It depends on K(+) as a cofactor.

The protein resides in the cytoplasm. The catalysed reaction is (R)-pantothenate + ATP = (R)-4'-phosphopantothenate + ADP + H(+). The protein operates within cofactor biosynthesis; coenzyme A biosynthesis; CoA from (R)-pantothenate: step 1/5. In terms of biological role, catalyzes the phosphorylation of pantothenate (Pan), the first step in CoA biosynthesis. This chain is Type III pantothenate kinase, found in Ectopseudomonas mendocina (strain ymp) (Pseudomonas mendocina).